The sequence spans 344 residues: uncharacterized protein (344 aa).

An N-terminal signal peptide occupies residues 1–19 (MRIIFYLTLLLFIFNKVKS). The propeptide at 323 to 344 (SATRNQISIMVLILSVLLVLIL) is removed in mature form.

It is found in the cell membrane. This is an uncharacterized protein from Dictyostelium discoideum (Social amoeba).